The primary structure comprises 558 residues: uncharacterized protein (558 aa).

A run of 5 helical transmembrane segments spans residues 15–32, 39–61, 76–95, 104–126, and 166–188; these read PSVT…ALGL, IGTI…HFGV, LVIF…FPSL, LISL…ILGI, and MALA…LALL. RCK C-terminal domains lie at 196–278 and 286–370; these read EERD…LFGK and RPDI…ILGD. Helical transmembrane passes span 383–405, 409–426, 446–468, 473–495, and 533–555; these read LFGG…GVSM, LGLA…GAFG, FGII…DTII, LLWV…WASI, and VVYA…IMIL.

This sequence belongs to the AAE transporter (TC 2.A.81) family.

It localises to the cell membrane. This is an uncharacterized protein from Porphyromonas gingivalis (strain ATCC BAA-308 / W83).